A 426-amino-acid chain; its full sequence is Enolase (426 aa).

Residue Gln-165 coordinates (2R)-2-phosphoglycerate. Glu-207 acts as the Proton donor in catalysis. Mg(2+) is bound by residues Asp-244, Glu-285, and Asp-312. (2R)-2-phosphoglycerate contacts are provided by Lys-337, Arg-366, Ser-367, and Lys-388. Lys-337 (proton acceptor) is an active-site residue.

It belongs to the enolase family. The cofactor is Mg(2+).

It is found in the cytoplasm. The protein localises to the secreted. Its subcellular location is the cell surface. The catalysed reaction is (2R)-2-phosphoglycerate = phosphoenolpyruvate + H2O. It participates in carbohydrate degradation; glycolysis; pyruvate from D-glyceraldehyde 3-phosphate: step 4/5. Catalyzes the reversible conversion of 2-phosphoglycerate (2-PG) into phosphoenolpyruvate (PEP). It is essential for the degradation of carbohydrates via glycolysis. The chain is Enolase from Cyanothece sp. (strain PCC 7425 / ATCC 29141).